The following is a 661-amino-acid chain: UvrABC system protein C (661 aa).

The GIY-YIG domain occupies 25–104; the sequence is AEPGCYLMRD…IKNHQPHFNV (80 aa). The region spanning 214–249 is the UVR domain; that stretch reads DELQHLLQEQMERYAERMDYESAARVRDQLQGLDQL. Basic and acidic residues predominate over residues 636 to 652; sequence FFHPSDEGTDADARAAL. A disordered region spans residues 636–661; that stretch reads FFHPSDEGTDADARAALEEQPQELSA.

The protein belongs to the UvrC family. As to quaternary structure, interacts with UvrB in an incision complex.

It localises to the cytoplasm. The UvrABC repair system catalyzes the recognition and processing of DNA lesions. UvrC both incises the 5' and 3' sides of the lesion. The N-terminal half is responsible for the 3' incision and the C-terminal half is responsible for the 5' incision. The sequence is that of UvrABC system protein C from Synechococcus sp. (strain CC9605).